We begin with the raw amino-acid sequence, 269 residues long: 1-(5-phosphoribosyl)-5-[(5-phosphoribosylamino)methylideneamino] imidazole-4-carboxamide isomerase (269 aa).

Asp-10 (proton acceptor) is an active-site residue. Residue Asp-132 is the Proton donor of the active site.

The protein belongs to the HisA/HisF family.

It is found in the cytoplasm. The enzyme catalyses 1-(5-phospho-beta-D-ribosyl)-5-[(5-phospho-beta-D-ribosylamino)methylideneamino]imidazole-4-carboxamide = 5-[(5-phospho-1-deoxy-D-ribulos-1-ylimino)methylamino]-1-(5-phospho-beta-D-ribosyl)imidazole-4-carboxamide. Its pathway is amino-acid biosynthesis; L-histidine biosynthesis; L-histidine from 5-phospho-alpha-D-ribose 1-diphosphate: step 4/9. The protein is 1-(5-phosphoribosyl)-5-[(5-phosphoribosylamino)methylideneamino] imidazole-4-carboxamide isomerase of Xylella fastidiosa (strain Temecula1 / ATCC 700964).